A 75-amino-acid chain; its full sequence is Exodeoxyribonuclease 7 small subunit (75 aa).

This sequence belongs to the XseB family. As to quaternary structure, heterooligomer composed of large and small subunits.

It is found in the cytoplasm. The catalysed reaction is Exonucleolytic cleavage in either 5'- to 3'- or 3'- to 5'-direction to yield nucleoside 5'-phosphates.. Functionally, bidirectionally degrades single-stranded DNA into large acid-insoluble oligonucleotides, which are then degraded further into small acid-soluble oligonucleotides. The protein is Exodeoxyribonuclease 7 small subunit of Listeria monocytogenes serotype 4b (strain CLIP80459).